The sequence spans 360 residues: MIASVGDSRYYPKSVANGEKSDQRERLVSAIPVEDDSSFELKLRPQWLREFIGQPKVKENLAVAIEAARSRGEALDHVLLYGPPGLGKTTLANIIANEMQAQFQQTSGPTLQIKGDLTAILTNVRDKQVLFIDEVHRLQPALEELLYSAVEDYKLDIIIGQGPSARTHTIDVAPFTLVAATTRAGLLSAPLRSRFGIVLRLEFYTTEDLKIILKRSAEILNVEIDEGGAAEIATRCRGTPRIANRLLRRVRDYAQVRGAGKIDRETAQKALEMLEVDQHGFDEVDRRLMLTIIEKYQGGPVGLNTLAASLAEETDAIEEIYEPFLIQLGFLDRTPRGRVATHLAYEYFKMKPPKKQDSLF.

Residues 1-23 form a disordered region; that stretch reads MIASVGDSRYYPKSVANGEKSDQ. The segment at 12–204 is large ATPase domain (RuvB-L); it reads PKSVANGEKS…FGIVLRLEFY (193 aa). ATP is bound by residues Leu43, Arg44, Gly85, Lys88, Thr89, Thr90, 151–153, Arg194, Tyr204, and Arg241; that span reads EDY. Thr89 is a Mg(2+) binding site. A small ATPAse domain (RuvB-S) region spans residues 205-275; that stretch reads TTEDLKIILK…TAQKALEMLE (71 aa). A head domain (RuvB-H) region spans residues 278–360; sequence QHGFDEVDRR…KPPKKQDSLF (83 aa). Arg333 and Arg338 together coordinate DNA.

Belongs to the RuvB family. In terms of assembly, homohexamer. Forms an RuvA(8)-RuvB(12)-Holliday junction (HJ) complex. HJ DNA is sandwiched between 2 RuvA tetramers; dsDNA enters through RuvA and exits via RuvB. An RuvB hexamer assembles on each DNA strand where it exits the tetramer. Each RuvB hexamer is contacted by two RuvA subunits (via domain III) on 2 adjacent RuvB subunits; this complex drives branch migration. In the full resolvosome a probable DNA-RuvA(4)-RuvB(12)-RuvC(2) complex forms which resolves the HJ.

It localises to the cytoplasm. It catalyses the reaction ATP + H2O = ADP + phosphate + H(+). In terms of biological role, the RuvA-RuvB-RuvC complex processes Holliday junction (HJ) DNA during genetic recombination and DNA repair, while the RuvA-RuvB complex plays an important role in the rescue of blocked DNA replication forks via replication fork reversal (RFR). RuvA specifically binds to HJ cruciform DNA, conferring on it an open structure. The RuvB hexamer acts as an ATP-dependent pump, pulling dsDNA into and through the RuvAB complex. RuvB forms 2 homohexamers on either side of HJ DNA bound by 1 or 2 RuvA tetramers; 4 subunits per hexamer contact DNA at a time. Coordinated motions by a converter formed by DNA-disengaged RuvB subunits stimulates ATP hydrolysis and nucleotide exchange. Immobilization of the converter enables RuvB to convert the ATP-contained energy into a lever motion, pulling 2 nucleotides of DNA out of the RuvA tetramer per ATP hydrolyzed, thus driving DNA branch migration. The RuvB motors rotate together with the DNA substrate, which together with the progressing nucleotide cycle form the mechanistic basis for DNA recombination by continuous HJ branch migration. Branch migration allows RuvC to scan DNA until it finds its consensus sequence, where it cleaves and resolves cruciform DNA. The chain is Holliday junction branch migration complex subunit RuvB from Koribacter versatilis (strain Ellin345).